Consider the following 126-residue polypeptide: Aspartate 1-decarboxylase (126 aa).

Ser-25 acts as the Schiff-base intermediate with substrate; via pyruvic acid in catalysis. A Pyruvic acid (Ser) modification is found at Ser-25. Thr-57 is a substrate binding site. The Proton donor role is filled by Tyr-58. A substrate-binding site is contributed by 73 to 75 (GAA).

Belongs to the PanD family. In terms of assembly, heterooctamer of four alpha and four beta subunits. Requires pyruvate as cofactor. Post-translationally, is synthesized initially as an inactive proenzyme, which is activated by self-cleavage at a specific serine bond to produce a beta-subunit with a hydroxyl group at its C-terminus and an alpha-subunit with a pyruvoyl group at its N-terminus.

It is found in the cytoplasm. The catalysed reaction is L-aspartate + H(+) = beta-alanine + CO2. It participates in cofactor biosynthesis; (R)-pantothenate biosynthesis; beta-alanine from L-aspartate: step 1/1. Functionally, catalyzes the pyruvoyl-dependent decarboxylation of aspartate to produce beta-alanine. This Sodalis glossinidius (strain morsitans) protein is Aspartate 1-decarboxylase.